Consider the following 312-residue polypeptide: Protoheme IX farnesyltransferase (312 aa).

The Cytoplasmic portion of the chain corresponds to 1-36 (MNKSNTAIDPTNVIEAGPDSSVADVQQKSWKDYLVL). The helical transmembrane segment at 37–55 (AKQGIVTSNLITTFAGIYL) threads the bilayer. The Extracellular segment spans residues 56-69 (AIVYTGTVFTMHLD). Residues 70-88 (TMIFALLGAALVMAGGCTL) traverse the membrane as a helical segment. The Cytoplasmic segment spans residues 89-110 (NNYIDRDIDHLMERTKERPTVT). The helical transmembrane segment at 111–129 (GRFSAKHVLLVGLAQAALG) threads the bilayer. Over 130–138 (IIFLALTTP) the chain is Extracellular. The helical transmembrane segment at 139 to 157 (TAAVIGLIGLFIYVVLYTM) threads the bilayer. At 158–228 (WTKRTTTLNT…YRAAGIPMLP (71 aa)) the chain is on the cytoplasmic side. Residues 229–247 (VVAGFEMTKRQMVVYVAAL) form a helical membrane-spanning segment. Residues 248 to 259 (LPVSLMLYPFGL) are Extracellular-facing. The helical transmembrane segment at 260 to 275 (VYTIVAAVLGVGWLAL) threads the bilayer. At 276 to 296 (GIAGFKMKDDIKWARLMFVYS) the chain is on the cytoplasmic side. Residues 297–307 (LNYLTILFVLM) form a helical membrane-spanning segment. Residues 308–312 (VIVHF) lie on the Extracellular side of the membrane.

The protein belongs to the UbiA prenyltransferase family.

It localises to the cell membrane. It catalyses the reaction heme b + (2E,6E)-farnesyl diphosphate + H2O = Fe(II)-heme o + diphosphate. Its pathway is porphyrin-containing compound metabolism; heme O biosynthesis; heme O from protoheme: step 1/1. In terms of biological role, converts protoheme IX and farnesyl diphosphate to heme O. The sequence is that of Protoheme IX farnesyltransferase (ctaB) from Alkalihalophilus pseudofirmus (strain ATCC BAA-2126 / JCM 17055 / OF4) (Bacillus pseudofirmus).